The primary structure comprises 231 residues: Uracil-DNA glycosylase (231 aa).

Asp71 acts as the Proton acceptor in catalysis.

It belongs to the uracil-DNA glycosylase (UDG) superfamily. UNG family.

The protein localises to the cytoplasm. The enzyme catalyses Hydrolyzes single-stranded DNA or mismatched double-stranded DNA and polynucleotides, releasing free uracil.. Functionally, excises uracil residues from the DNA which can arise as a result of misincorporation of dUMP residues by DNA polymerase or due to deamination of cytosine. The polypeptide is Uracil-DNA glycosylase (Pseudomonas aeruginosa (strain UCBPP-PA14)).